The primary structure comprises 528 residues: Probable rhamnogalacturonate lyase A (528 aa).

Residues 1–20 form the signal peptide; it reads MLSKATLLLSLPFWARVANA. Asn-46 carries N-linked (GlcNAc...) asparagine glycosylation. 2 disulfide bridges follow: Cys-50–Cys-93 and Cys-184–Cys-193. N-linked (GlcNAc...) asparagine glycosylation occurs at Asn-351.

Belongs to the polysaccharide lyase 4 family.

Its subcellular location is the secreted. It catalyses the reaction Endotype eliminative cleavage of L-alpha-rhamnopyranosyl-(1-&gt;4)-alpha-D-galactopyranosyluronic acid bonds of rhamnogalacturonan I domains in ramified hairy regions of pectin leaving L-rhamnopyranose at the reducing end and 4-deoxy-4,5-unsaturated D-galactopyranosyluronic acid at the non-reducing end.. Its function is as follows. Pectinolytic enzymes consist of four classes of enzymes: pectin lyase, polygalacturonase, pectin methylesterase and rhamnogalacturonase. Degrades the rhamnogalacturonan I (RG-I) backbone of pectin. This is Probable rhamnogalacturonate lyase A (rglA) from Neosartorya fischeri (strain ATCC 1020 / DSM 3700 / CBS 544.65 / FGSC A1164 / JCM 1740 / NRRL 181 / WB 181) (Aspergillus fischerianus).